The sequence spans 599 residues: Elongation factor 4 (599 aa).

The tr-type G domain maps to 2–184 (KNIRNFSIIA…RLVRDIPPPE (183 aa)). GTP contacts are provided by residues 14 to 19 (DHGKST) and 131 to 134 (NKID).

Belongs to the TRAFAC class translation factor GTPase superfamily. Classic translation factor GTPase family. LepA subfamily.

Its subcellular location is the cell inner membrane. It carries out the reaction GTP + H2O = GDP + phosphate + H(+). Functionally, required for accurate and efficient protein synthesis under certain stress conditions. May act as a fidelity factor of the translation reaction, by catalyzing a one-codon backward translocation of tRNAs on improperly translocated ribosomes. Back-translocation proceeds from a post-translocation (POST) complex to a pre-translocation (PRE) complex, thus giving elongation factor G a second chance to translocate the tRNAs correctly. Binds to ribosomes in a GTP-dependent manner. This Cronobacter sakazakii (strain ATCC BAA-894) (Enterobacter sakazakii) protein is Elongation factor 4.